A 251-amino-acid polypeptide reads, in one-letter code: Triosephosphate isomerase (251 aa).

Residue 8 to 10 coordinates substrate; the sequence is NWK. The active-site Electrophile is His97. Catalysis depends on Glu170, which acts as the Proton acceptor. Substrate is bound by residues Gly176, Ser215, and 236 to 237; that span reads GG.

The protein belongs to the triosephosphate isomerase family. As to quaternary structure, homodimer.

It localises to the cytoplasm. It catalyses the reaction D-glyceraldehyde 3-phosphate = dihydroxyacetone phosphate. It functions in the pathway carbohydrate biosynthesis; gluconeogenesis. The protein operates within carbohydrate degradation; glycolysis; D-glyceraldehyde 3-phosphate from glycerone phosphate: step 1/1. Functionally, involved in the gluconeogenesis. Catalyzes stereospecifically the conversion of dihydroxyacetone phosphate (DHAP) to D-glyceraldehyde-3-phosphate (G3P). This chain is Triosephosphate isomerase, found in Nitratidesulfovibrio vulgaris (strain DSM 19637 / Miyazaki F) (Desulfovibrio vulgaris).